A 95-amino-acid polypeptide reads, in one-letter code: UPF0213 protein PEPE_0875 (95 aa).

In terms of domain architecture, GIY-YIG spans 7–82 (NGFYFYVLRC…KQRTRSSKIK (76 aa)).

The protein belongs to the UPF0213 family.

The protein is UPF0213 protein PEPE_0875 of Pediococcus pentosaceus (strain ATCC 25745 / CCUG 21536 / LMG 10740 / 183-1w).